The following is a 252-amino-acid chain: Beta-crystallin B1 (252 aa).

Low complexity-rich tracts occupy residues 1-15 and 24-37; these read MSQA…TVAV and KGAP…SPGT. Residues 1 to 42 are disordered; that stretch reads MSQAAKASASATVAVNPGPDTKGKGAPPAGTSPSPGTTLAPT. Serine 2 is subject to N-acetylserine. The N-terminal arm stretch occupies residues 2-58; the sequence is SQAAKASASATVAVNPGPDTKGKGAPPAGTSPSPGTTLAPTTVPITSAKAAELPPGN. 2 Beta/gamma crystallin 'Greek key' domains span residues 59-98 and 99-143; these read YRLV…IVSA and GPWV…RPIK. The interval 144–148 is connecting peptide; it reads MDAQE. 2 Beta/gamma crystallin 'Greek key' domains span residues 149-190 and 191-233; these read HKIS…KVSS and GTWV…RRLR. Residues 235 to 252 are C-terminal arm; it reads KQWHLEGSFPVLATEPPK.

This sequence belongs to the beta/gamma-crystallin family. In terms of assembly, homo/heterodimer, or complexes of higher-order. The structure of beta-crystallin oligomers seems to be stabilized through interactions between the N-terminal arms. Specific cleavages in the N-terminal arm occur during lens maturation and give rise to truncated forms, leading to impaired oligomerization and protein insolubilization.

Functionally, crystallins are the dominant structural components of the vertebrate eye lens. In Homo sapiens (Human), this protein is Beta-crystallin B1 (CRYBB1).